The following is a 242-amino-acid chain: Tryptophan synthase alpha chain (242 aa).

Residues E31 and D42 each act as proton acceptor in the active site.

Belongs to the TrpA family. In terms of assembly, tetramer of two alpha and two beta chains.

It catalyses the reaction (1S,2R)-1-C-(indol-3-yl)glycerol 3-phosphate + L-serine = D-glyceraldehyde 3-phosphate + L-tryptophan + H2O. Its pathway is amino-acid biosynthesis; L-tryptophan biosynthesis; L-tryptophan from chorismate: step 5/5. Its function is as follows. The alpha subunit is responsible for the aldol cleavage of indoleglycerol phosphate to indole and glyceraldehyde 3-phosphate. This chain is Tryptophan synthase alpha chain, found in Staphylococcus aureus (strain USA300).